The primary structure comprises 129 residues: Protein BEX2 (129 aa).

The segment at 1–37 (MESKVEQGVKNLNMENDHQEKEEKEEKPQDASKRDPI) is disordered. Residues 15–36 (ENDHQEKEEKEEKPQDASKRDP) show a composition bias toward basic and acidic residues. At R51 the chain carries Omega-N-methylarginine. The tract at residues 118–122 (HHDHH) is his cluster. Zn(2+) is bound at residue C126.

The protein belongs to the BEX family. In terms of assembly, interacts with LMO2, possibly leading to regulate the transcriptional activity of a DNA-binding complex containing LMO2. Interacts with OMP. As to expression, primarily localized to neuronal cells within several regions of the brain, including the olfactory epithelium, bulb, peri/paraventricular nuclei, suprachiasmatic nucleus, arcuate nucleus, median eminence, lateral hypothalamic area, thalamus, hippocampus and cerebellum (at protein level).

The protein resides in the cytoplasm. It is found in the nucleus. Regulator of mitochondrial apoptosis and G1 cell cycle. Regulates the level of PP2A regulatory subunit B and PP2A phosphatase activity. In absence of reductive stress, acts as a pseudosubstrate for the CRL2(FEM1B) complex: associates with FEM1B via zinc, thereby preventing association between FEM1B and its substrates. The protein is Protein BEX2 of Mus musculus (Mouse).